The chain runs to 372 residues: MLDIQQLVKTYENGHQAVKGVDLAIHQGEFIVLVGPSGCGKSSILRSIAGLEAITSGEIHLAGRRVDNEKPANRDIAMVFQNYALYPHMSVYDNLAYGLKNRGVSKATIAEKIAKVAKTLKIEEYLDRKPAKLSGGQRQRVAMGRAIVRDPQLFLFDEPLSNLDAALRAHMRLEIKKLQRELGVTSVYVTHDQVEAMTLADRIVVLKQGEIEQIGTPAEVYHQPASTFVASFIGSPAMNFLAASIRDGKLQLAGKQWSVPYDANLNCNTLTLGIRPEHASLQPVDDAIELSINIQVVEPLGPNQLVHGKINGEYGDEDFIAVTAEMPLTIGDNLPIWVRVEQLHLFDEQEKRIPISAQSPSVDTRQQQRQQQ.

One can recognise an ABC transporter domain in the interval 2–233 (LDIQQLVKTY…PASTFVASFI (232 aa)). 35 to 42 (GPSGCGKS) contacts ATP.

This sequence belongs to the ABC transporter superfamily. sn-glycerol-3-phosphate importer (TC 3.A.1.1.3) family. The complex is composed of two ATP-binding proteins (UgpC), two transmembrane proteins (UgpA and UgpE) and a solute-binding protein (UgpB).

It is found in the cell inner membrane. It catalyses the reaction sn-glycerol 3-phosphate(out) + ATP + H2O = sn-glycerol 3-phosphate(in) + ADP + phosphate + H(+). In terms of biological role, part of the ABC transporter complex UgpBAEC involved in sn-glycerol-3-phosphate (G3P) import. Responsible for energy coupling to the transport system. The chain is sn-glycerol-3-phosphate import ATP-binding protein UgpC from Vibrio vulnificus (strain CMCP6).